The following is a 750-amino-acid chain: 5-methyltetrahydropteroyltriglutamate--homocysteine methyltransferase (750 aa).

5-methyltetrahydropteroyltri-L-glutamate contacts are provided by residues 15-18 and K114; that span reads RELK. L-homocysteine-binding positions include 425–427 and E478; that span reads IGS. Residues 425 to 427 and E478 contribute to the L-methionine site; that span reads IGS. W555 is a binding site for 5-methyltetrahydropteroyltri-L-glutamate. D593 is an L-homocysteine binding site. D593 contributes to the L-methionine binding site. Residue E599 participates in 5-methyltetrahydropteroyltri-L-glutamate binding. Positions 636, 638, and 660 each coordinate Zn(2+). The active-site Proton donor is the H689. C721 is a Zn(2+) binding site.

The protein belongs to the vitamin-B12 independent methionine synthase family. It depends on Zn(2+) as a cofactor.

The enzyme catalyses 5-methyltetrahydropteroyltri-L-glutamate + L-homocysteine = tetrahydropteroyltri-L-glutamate + L-methionine. It functions in the pathway amino-acid biosynthesis; L-methionine biosynthesis via de novo pathway; L-methionine from L-homocysteine (MetE route): step 1/1. Catalyzes the transfer of a methyl group from 5-methyltetrahydrofolate to homocysteine resulting in methionine formation. The sequence is that of 5-methyltetrahydropteroyltriglutamate--homocysteine methyltransferase from Streptococcus gordonii (strain Challis / ATCC 35105 / BCRC 15272 / CH1 / DL1 / V288).